Reading from the N-terminus, the 428-residue chain is Methyl-branched lipid omega-hydroxylase (428 aa).

Cysteine 379 serves as a coordination point for heme.

It belongs to the cytochrome P450 family. The cofactor is heme.

The catalysed reaction is a methyl-branched lipid + O2 + 2 reduced ferredoxin [iron-sulfur] cluster + 2 H(+) = an omega-hydroxy-methyl-branched lipid + H2O + 2 oxidized ferredoxin [iron-sulfur] cluster.. It carries out the reaction cholest-4-en-3-one + 6 reduced [2Fe-2S]-[ferredoxin] + 3 O2 + 5 H(+) = (25R)-3-oxocholest-4-en-26-oate + 6 oxidized [2Fe-2S]-[ferredoxin] + 4 H2O. Its pathway is lipid metabolism; branched-chain fatty acid metabolism. Functionally, primarily hydroxylates the omega-carbon of a number of methyl-branched lipids, including (2E,6E)-farnesol, phytanate, geranylgeraniol, 15-methylpalmitate and (2E,6E)-farnesyl diphosphate. Also catalyzes the sequential oxidation of the terminal methyl of cholest-4-en-3-one into (25R)-26-hydroxycholest-4-en-3-one (alcohol), (25R)-26-oxocholest-4-en-3-one (aldehyde), to finally yield the carboxylic acid (25R)-3-oxocholest-4-en-26-oate. Also able to sequentially oxidize cholesterol itself, not only cholest-4-en-3-one. This is Methyl-branched lipid omega-hydroxylase (cyp124) from Mycobacterium tuberculosis (strain CDC 1551 / Oshkosh).